A 202-amino-acid polypeptide reads, in one-letter code: uncharacterized protein (202 aa).

This is an uncharacterized protein from Treponema pallidum (strain Nichols).